A 227-amino-acid polypeptide reads, in one-letter code: MKVLIPVSPINSLKTRLSEFLSSEERKNLLLNMLRDINKALEGLDVVIISRDEEILEFGKNELKAETIKEKYKGLNKAIKQAFEEIEDDEVIIIPADIPLIKKRHIEDILKLSKDYDVIIAPSRGGGTNLLYLKSKNLIEIKYEGFSFLKHLEEAKKKNLRYYIYDSFLISVDINTPEDLGEIFIHGDSTYTKNYLKGLGIEVESKHSSAGRFVVKRGGDNEVSNPM.

The protein belongs to the CofC family. Homodimer.

The enzyme catalyses (2S)-2-phospholactate + GTP + H(+) = (2S)-lactyl-2-diphospho-5'-guanosine + diphosphate. It functions in the pathway cofactor biosynthesis; coenzyme F420 biosynthesis. Guanylyltransferase that catalyzes the activation of (2S)-2-phospholactate (2-PL) as (2S)-lactyl-2-diphospho-5'-guanosine, via the condensation of 2-PL with GTP. It is involved in the biosynthesis of coenzyme F420, a hydride carrier cofactor. This Methanocaldococcus sp. (strain FS406-22) protein is 2-phospho-L-lactate guanylyltransferase.